Here is a 215-residue protein sequence, read N- to C-terminus: Protein FAM167A (215 aa).

Disordered stretches follow at residues 1 to 26 and 63 to 109; these read MSVP…PPDD and RPAA…LTTG. A coiled-coil region spans residues 124–157; the sequence is LRKELAEMRLQDQQLARQLMRLRGDINKLKIEQT.

This sequence belongs to the FAM167 (SEC) family.

This chain is Protein FAM167A (Fam167a), found in Mus musculus (Mouse).